Here is a 608-residue protein sequence, read N- to C-terminus: Phosphoenolpyruvate carboxykinase [GTP] (608 aa).

Substrate is bound by residues Arg82 and 222 to 224 (YGG). 2 residues coordinate Mn(2+): Lys231 and His251. Ser273 is a binding site for substrate. 274-279 (ACGKTN) lines the GTP pocket. The active site involves Cys275. Asp298 contacts Mn(2+). 389–391 (NSR) contributes to the substrate binding site. GTP-binding positions include Arg391, Arg422, and 517–520 (FGDN).

This sequence belongs to the phosphoenolpyruvate carboxykinase [GTP] family. In terms of assembly, monomer. Mn(2+) is required as a cofactor.

The protein resides in the cytoplasm. It carries out the reaction oxaloacetate + GTP = phosphoenolpyruvate + GDP + CO2. It functions in the pathway carbohydrate biosynthesis; gluconeogenesis. Its function is as follows. Catalyzes the conversion of oxaloacetate (OAA) to phosphoenolpyruvate (PEP), the rate-limiting step in the metabolic pathway that produces glucose from lactate and other precursors derived from the citric acid cycle. This Paenarthrobacter aurescens (strain TC1) protein is Phosphoenolpyruvate carboxykinase [GTP].